Reading from the N-terminus, the 249-residue chain is tRNA pseudouridine synthase A (249 aa).

The active-site Nucleophile is the aspartate 53. Residue tyrosine 111 coordinates substrate.

Belongs to the tRNA pseudouridine synthase TruA family. In terms of assembly, homodimer.

The catalysed reaction is uridine(38/39/40) in tRNA = pseudouridine(38/39/40) in tRNA. Formation of pseudouridine at positions 38, 39 and 40 in the anticodon stem and loop of transfer RNAs. The polypeptide is tRNA pseudouridine synthase A (Streptococcus mutans serotype c (strain ATCC 700610 / UA159)).